Here is a 639-residue protein sequence, read N- to C-terminus: Splicing factor 1 (639 aa).

Disordered regions lie at residues Met1 to Pro42 and Leu65 to Leu94. N-acetylalanine is present on Ala2. Ser14 bears the Phosphoserine mark. Residues Lys15–Arg19 carry the Nuclear localization signal motif. Ser20 is modified (phosphoserine; by PKG). Residues Ser80 and Ser82 each carry the phosphoserine modification. Tyr87 carries the post-translational modification Phosphotyrosine. Ser89 is subject to Phosphoserine. The 82-residue stretch at Met141–Ile222 folds into the KH domain. The CCHC-type zinc-finger motif lies at Thr277–Arg296. Positions Val325–Asn639 are disordered. Residues Pro335–Ala350 are compositionally biased toward low complexity. Gly residues predominate over residues Met382 to Pro394. Residues Asn418–Met447 are compositionally biased toward pro residues. Leu463 is modified (phosphoserine). Omega-N-methylarginine is present on Lys467. Pro residues predominate over residues Met470–Pro499. Low complexity-rich tracts occupy residues Ser515–Thr534 and Pro542–Met566. Composition is skewed to pro residues over residues Val567–Gly591 and Ala598–Asp608. Low complexity predominate over residues Met615–Pro625. The segment covering Phe626–Asn639 has biased composition (pro residues).

Belongs to the BBP/SF1 family. As to quaternary structure, binds U2AF2. Interacts with U1 snRNA. Binds EWSR1, FUS and TAF15. Interacts with RBM17. In terms of processing, phosphorylation on Ser-20 interferes with U2AF2 binding and spliceosome assembly. Isoform 6 is phosphorylated on Ser-463. As to expression, detected in lung, ovary, adrenal gland, colon, kidney, muscle, pancreas, thyroid, placenta, brain, liver and heart.

It is found in the nucleus. Necessary for the ATP-dependent first step of spliceosome assembly. Binds to the intron branch point sequence (BPS) 5'-UACUAAC-3' of the pre-mRNA. May act as transcription repressor. The protein is Splicing factor 1 (SF1) of Homo sapiens (Human).